We begin with the raw amino-acid sequence, 213 residues long: Protein Syd (213 aa).

The protein belongs to the Syd family.

Its subcellular location is the cell inner membrane. Interacts with the SecY protein in vivo. May bind preferentially to an uncomplexed state of SecY, thus functioning either as a chelating agent for excess SecY in the cell or as a regulatory factor that negatively controls the translocase function. This chain is Protein Syd, found in Shewanella pealeana (strain ATCC 700345 / ANG-SQ1).